Reading from the N-terminus, the 274-residue chain is Bis(5'-nucleosyl)-tetraphosphatase, symmetrical (274 aa).

This sequence belongs to the Ap4A hydrolase family.

It catalyses the reaction P(1),P(4)-bis(5'-adenosyl) tetraphosphate + H2O = 2 ADP + 2 H(+). Its function is as follows. Hydrolyzes diadenosine 5',5'''-P1,P4-tetraphosphate to yield ADP. The protein is Bis(5'-nucleosyl)-tetraphosphatase, symmetrical of Buchnera aphidicola subsp. Acyrthosiphon pisum (strain 5A).